An 80-amino-acid polypeptide reads, in one-letter code: RNA-binding protein Hfq (80 aa).

In terms of domain architecture, Sm spans aspartate 9 to isoleucine 69.

This sequence belongs to the Hfq family. In terms of assembly, homohexamer.

RNA chaperone that binds small regulatory RNA (sRNAs) and mRNAs to facilitate mRNA translational regulation in response to envelope stress, environmental stress and changes in metabolite concentrations. Also binds with high specificity to tRNAs. This Alkaliphilus metalliredigens (strain QYMF) protein is RNA-binding protein Hfq.